The sequence spans 490 residues: Lysine--tRNA ligase (490 aa).

Residues glutamate 398 and glutamate 405 each contribute to the Mg(2+) site.

Belongs to the class-II aminoacyl-tRNA synthetase family. As to quaternary structure, homodimer. It depends on Mg(2+) as a cofactor.

The protein resides in the cytoplasm. The enzyme catalyses tRNA(Lys) + L-lysine + ATP = L-lysyl-tRNA(Lys) + AMP + diphosphate. This Metamycoplasma arthritidis (strain 158L3-1) (Mycoplasma arthritidis) protein is Lysine--tRNA ligase.